We begin with the raw amino-acid sequence, 435 residues long: MKTFNGTFFNLPPDKSISHRTALIGALSNGITEITNYSAGLDNQTTLSVLQSLGVDIQQESFLTNDGYEQRKVVIKSSGLWSLSRSKRELMCNNSGSTIRMLSGILAAQPFRTTLVGDHSLMKRPMRRVAEPLTQMGASIKLSETGAPPIEIEGKKPLSPIQFYQKIPSAQVKSLVIFAALHADGISEIIEPIQTRNHTELMLGLEPELQPDGSRKIVIEGQKNIEAKPFTVPADPSGACFLVALGLLSGKSDIRLKNVGLNHTRAGYLSLLREAGAKLPTENNRTIGGELLGDIIISNDYITKPLRINDAQIVSDIIDEIPMLAVLSAMATGEFELHHAAELRAKESDRIHALVMNLQRLGFVCEEYKDGFCVTGRTHNPTGTIEITTFYDHRIAMSFAIAGHFSNAEIQLDDNSSIAVSFPNFFSLIDSMQKT.

The 3-phosphoshikimate site is built by K15, S16, and R20. K15 is a phosphoenolpyruvate binding site. Phosphoenolpyruvate is bound by residues G96 and R124. Residues S169, Q171, T195, D319, and K346 each contribute to the 3-phosphoshikimate site. Q171 is a binding site for phosphoenolpyruvate. The Proton acceptor role is filled by D319. Phosphoenolpyruvate contacts are provided by R350 and R394.

It belongs to the EPSP synthase family. In terms of assembly, monomer.

It is found in the cytoplasm. The enzyme catalyses 3-phosphoshikimate + phosphoenolpyruvate = 5-O-(1-carboxyvinyl)-3-phosphoshikimate + phosphate. It participates in metabolic intermediate biosynthesis; chorismate biosynthesis; chorismate from D-erythrose 4-phosphate and phosphoenolpyruvate: step 6/7. In terms of biological role, catalyzes the transfer of the enolpyruvyl moiety of phosphoenolpyruvate (PEP) to the 5-hydroxyl of shikimate-3-phosphate (S3P) to produce enolpyruvyl shikimate-3-phosphate and inorganic phosphate. This chain is 3-phosphoshikimate 1-carboxyvinyltransferase, found in Chloroherpeton thalassium (strain ATCC 35110 / GB-78).